Here is a 236-residue protein sequence, read N- to C-terminus: Chorionic somatomammotropin hormone 1 (236 aa).

The first 36 residues, 1–36, serve as a signal peptide directing secretion; it reads MAPASSHRGHQWICDLVRGSCLLLLLVVSNLLLCQG. Residue Asn-89 is glycosylated (N-linked (GlcNAc...) asparagine). Cystine bridges form between Cys-98–Cys-214 and Cys-231–Cys-236.

Belongs to the somatotropin/prolactin family.

It localises to the secreted. The protein is Chorionic somatomammotropin hormone 1 (CSH1) of Bos taurus (Bovine).